A 284-amino-acid polypeptide reads, in one-letter code: Bifunctional protein FolD 2 (284 aa).

NADP(+) contacts are provided by residues 166 to 168 (GAS) and Ile232.

It belongs to the tetrahydrofolate dehydrogenase/cyclohydrolase family. In terms of assembly, homodimer.

It catalyses the reaction (6R)-5,10-methylene-5,6,7,8-tetrahydrofolate + NADP(+) = (6R)-5,10-methenyltetrahydrofolate + NADPH. The catalysed reaction is (6R)-5,10-methenyltetrahydrofolate + H2O = (6R)-10-formyltetrahydrofolate + H(+). It participates in one-carbon metabolism; tetrahydrofolate interconversion. Its function is as follows. Catalyzes the oxidation of 5,10-methylenetetrahydrofolate to 5,10-methenyltetrahydrofolate and then the hydrolysis of 5,10-methenyltetrahydrofolate to 10-formyltetrahydrofolate. The chain is Bifunctional protein FolD 2 from Pseudomonas putida (strain ATCC 47054 / DSM 6125 / CFBP 8728 / NCIMB 11950 / KT2440).